A 251-amino-acid chain; its full sequence is MTVSINEVSKYFWKQTGTVQVLENINFQLEKGDFVTVIGPSGCGKSTLLKIVAGLDNDFEGEIIIDGERITKPSKKQGFIFQEHRLFPWLTVEENIAADLSLKDKYVKDKVKEWVEIVRLDGFEKSYPKEISGGMSQRVAIARALLRDPSVLLLDEPFGALDAFTRSHLQEVLLNIWEQKKTTMIFVTHDIDEAIYLSNRIVIMSAKPGEIHKVIENNLSYPRNKTSQSFQQLRTKVLQQFEHGGLIQTSI.

The ABC transporter domain occupies 3-231 (VSINEVSKYF…PRNKTSQSFQ (229 aa)). 39 to 46 (GPSGCGKS) lines the ATP pocket.

The protein belongs to the ABC transporter superfamily. Aliphatic sulfonates importer (TC 3.A.1.17.2) family. As to quaternary structure, the complex is composed of two ATP-binding proteins (SsuB), two transmembrane proteins (SsuC) and a solute-binding protein (SsuA).

The protein resides in the cell membrane. The enzyme catalyses ATP + H2O + aliphatic sulfonate-[sulfonate-binding protein]Side 1 = ADP + phosphate + aliphatic sulfonateSide 2 + [sulfonate-binding protein]Side 1.. In terms of biological role, part of the ABC transporter complex SsuABC involved in aliphatic sulfonates import. Responsible for energy coupling to the transport system. In Bacillus anthracis, this protein is Aliphatic sulfonates import ATP-binding protein SsuB.